The primary structure comprises 282 residues: Pantothenate synthetase (282 aa).

An ATP-binding site is contributed by 30 to 37 (MGALHQGH). His-37 acts as the Proton donor in catalysis. Gln-61 contacts (R)-pantoate. Gln-61 contacts beta-alanine. 149-152 (GEKD) serves as a coordination point for ATP. A (R)-pantoate-binding site is contributed by Gln-155. ATP is bound by residues Leu-178 and 186–189 (MSSR).

The protein belongs to the pantothenate synthetase family. Homodimer.

It is found in the cytoplasm. It catalyses the reaction (R)-pantoate + beta-alanine + ATP = (R)-pantothenate + AMP + diphosphate + H(+). It functions in the pathway cofactor biosynthesis; (R)-pantothenate biosynthesis; (R)-pantothenate from (R)-pantoate and beta-alanine: step 1/1. Functionally, catalyzes the condensation of pantoate with beta-alanine in an ATP-dependent reaction via a pantoyl-adenylate intermediate. The protein is Pantothenate synthetase of Flavobacterium psychrophilum (strain ATCC 49511 / DSM 21280 / CIP 103535 / JIP02/86).